A 254-amino-acid polypeptide reads, in one-letter code: Mamu class II histocompatibility antigen, DR alpha chain (254 aa).

The first 25 residues, 1–25, serve as a signal peptide directing secretion; sequence MAESGVPVLGFFIIAVLMSAQESWA. An alpha-1 region spans residues 26 to 109; the sequence is IKEEHVIIQA…KRSNNTPITN (84 aa). Topologically, residues 26 to 216 are extracellular; sequence IKEEHVIIQA…APSPLPETTE (191 aa). The N-linked (GlcNAc...) asparagine glycan is linked to Asn103. The alpha-2 stretch occupies residues 110 to 203; that stretch reads VPPEVTVLTN…CLDAPLLKHW (94 aa). Residues 112–204 form the Ig-like C1-type domain; it reads PEVTVLTNSP…LDAPLLKHWE (93 aa). A disulfide bridge connects residues Cys132 and Cys188. Residues 204-216 are connecting peptide; sequence EFDAPSPLPETTE. The helical transmembrane segment at 217–239 threads the bilayer; sequence NVVCALGLIVGLVGIIVGTVFII. Residues 240–254 lie on the Cytoplasmic side of the membrane; sequence KGVRKSNAAERRGPL. Residue Lys244 forms a Glycyl lysine isopeptide (Lys-Gly) (interchain with G-Cter in ubiquitin) linkage.

This sequence belongs to the MHC class II family. As to quaternary structure, heterodimer of an alpha chain and a beta chain.

The protein resides in the membrane. The protein is Mamu class II histocompatibility antigen, DR alpha chain (Mamu-DRA) of Macaca mulatta (Rhesus macaque).